Reading from the N-terminus, the 262-residue chain is 2-keto-4-pentenoate hydratase (262 aa).

This sequence belongs to the hydratase/decarboxylase family. MhpD subfamily. A divalent metal cation serves as cofactor.

The enzyme catalyses (S)-4-hydroxy-2-oxopentanoate = (2Z)-2-hydroxypenta-2,4-dienoate + H2O. Its pathway is aromatic compound metabolism; 3-phenylpropanoate degradation. In terms of biological role, catalyzes the conversion of 2-hydroxypentadienoic acid (enolic form of 2-oxopent-4-enoate) to 4-hydroxy-2-ketopentanoic acid. This chain is 2-keto-4-pentenoate hydratase, found in Burkholderia vietnamiensis (strain G4 / LMG 22486) (Burkholderia cepacia (strain R1808)).